Reading from the N-terminus, the 255-residue chain is Accessory gland-specific peptide 26Aa (255 aa).

A signal peptide spans 1–18; it reads MNQILLCSQILLLLFAVA. Positions 86–110 are disordered; it reads PINNSKSRKNSSTLPSQILTDKPNQ. Polar residues predominate over residues 87–110; that stretch reads INNSKSRKNSSTLPSQILTDKPNQ. Asn-88, Asn-95, and Asn-136 each carry an N-linked (GlcNAc...) asparagine glycan. Disordered stretches follow at residues 177–197 and 235–255; these read NAQNARKPTKSCKKRPSKDIA and NNPATDVPTGKSPSEGNPSTT. Basic residues predominate over residues 183-192; it reads KPTKSCKKRP. A compositionally biased stretch (polar residues) spans 245 to 255; it reads KSPSEGNPSTT.

In terms of processing, it undergoes several cleavages as it is secreted and it is further processed in the recipient female. Main cells of the accessory glands of males.

The protein resides in the secreted. It localises to the extracellular space. Functionally, this protein is transferred from male to female's hemolymph during mating, affecting egglaying and behavior after mating. The polypeptide is Accessory gland-specific peptide 26Aa (Acp26Aa) (Drosophila simulans (Fruit fly)).